The sequence spans 331 residues: UDP-GalNAc:beta-1,3-N-acetylgalactosaminyltransferase 1 (331 aa).

The Cytoplasmic portion of the chain corresponds to 1 to 20 (MASALWTVLPSRMSLRSLKW). Residues 21–43 (SLLLLSLLSFFVMWYLSLPHYNV) traverse the membrane as a helical; Signal-anchor for type II membrane protein segment. The Lumenal segment spans residues 44 to 331 (IERVNWMYFY…VMLRNTTCHY (288 aa)). N-linked (GlcNAc...) asparagine glycosylation is found at Asn72, Asn154, Asn198, Asn212, and Asn326.

The protein belongs to the glycosyltransferase 31 family. Requires Mg(2+) as cofactor. As to expression, higher expression in heart and brain, and to a lesser extent in lung, placenta, kidney and testis. Lower expression in liver, spleen and stomach. No expression in skeletal muscle.

It is found in the golgi apparatus membrane. It carries out the reaction a globoside Gb3Cer (d18:1(4E)) + UDP-N-acetyl-alpha-D-galactosamine = a globoside Gb4Cer (d18:1(4E)) + UDP + H(+). Its pathway is protein modification; protein glycosylation. Transfers N-acetylgalactosamine onto globotriaosylceramide. Plays a critical role in preimplantation stage embryonic development. This is UDP-GalNAc:beta-1,3-N-acetylgalactosaminyltransferase 1 from Homo sapiens (Human).